The chain runs to 241 residues: Small ribosomal subunit protein uS2 (241 aa).

Belongs to the universal ribosomal protein uS2 family.

In Escherichia coli O127:H6 (strain E2348/69 / EPEC), this protein is Small ribosomal subunit protein uS2.